The following is a 630-amino-acid chain: Phosphatidylinositol 4-kinase gamma 5 (630 aa).

Residues 41-98 enclose the Ubiquitin-like; degenerate domain; that stretch reads RRVFVQTETGCVLGLELDRSDNAHTVKRKLQVALNFPIEESSLTFGDLVLKNDLTAVR. Residues 162-459 enclose the PI3K/PI4K catalytic domain; that stretch reads GIDPVAVNSG…LIGEKDAESP (298 aa). The segment at 168–174 is G-loop; sequence VNSGLGG. Residues 169 to 175, Lys-190, and 279 to 282 each bind ATP; these read NSGLGGA and QQFI. Residues 312 to 320 form a catalytic loop region; sequence LNTDRHSGN. An activation loop region spans residues 339–365; sequence PIDHGLCLPETLEDPYFEWIHWPQASI. Residue Asp-341 participates in ATP binding. Residues 500–527 form a disordered region; the sequence is LSKVEETTEDGEEEEEEDREEEENDRAD. Over residues 506-524 the composition is skewed to acidic residues; that stretch reads TTEDGEEEEEEDREEEEND. Ser-571 carries the phosphoserine modification.

Belongs to the PI3/PI4-kinase family. Type II PI4K subfamily. Interacts with AHK2.

The enzyme catalyses a 1,2-diacyl-sn-glycero-3-phospho-(1D-myo-inositol) + ATP = a 1,2-diacyl-sn-glycero-3-phospho-(1D-myo-inositol 4-phosphate) + ADP + H(+). Functionally, the phosphorylation of phosphatidylinositol (PI) to PI4P is the first committed step in the generation of phosphatidylinositol 4,5-bisphosphate (PIP2), a precursor of the second messenger inositol 1,4,5-trisphosphate (InsP3). This chain is Phosphatidylinositol 4-kinase gamma 5 (PI4KG5), found in Arabidopsis thaliana (Mouse-ear cress).